A 505-amino-acid chain; its full sequence is Lysine--tRNA ligase (505 aa).

Glu415 and Glu422 together coordinate Mg(2+).

Belongs to the class-II aminoacyl-tRNA synthetase family. As to quaternary structure, homodimer. The cofactor is Mg(2+).

The protein resides in the cytoplasm. It carries out the reaction tRNA(Lys) + L-lysine + ATP = L-lysyl-tRNA(Lys) + AMP + diphosphate. The sequence is that of Lysine--tRNA ligase from Salmonella paratyphi C (strain RKS4594).